A 313-amino-acid chain; its full sequence is Olfactory receptor 4E2 (313 aa).

Over 1 to 25 (MDSLNQTRVTEFVFLGLTDNRVLEM) the chain is Extracellular. N-linked (GlcNAc...) asparagine glycosylation is present at N5. The helical transmembrane segment at 26–49 (LFFMAFSAIYMLTLSGNILIIIAT) threads the bilayer. Topologically, residues 50–57 (VFTPSLHT) are cytoplasmic. A helical transmembrane segment spans residues 58-79 (PMYFFLSNLSFIDICHSSVTVP). At 80–100 (KMLEGLLLERKTISFDNCITQ) the chain is on the extracellular side. The cysteines at positions 97 and 179 are disulfide-linked. The helical transmembrane segment at 101-120 (LFFLHLFACAEIFLLIIVAY) threads the bilayer. Residues H105 and C109 each coordinate Cu cation. The Cytoplasmic segment spans residues 121–139 (DRYVAICTPLHYPNVMNMR). The helical transmembrane segment at 140–158 (VCIQLVFALWLGGTVHSLG) threads the bilayer. Over 159 to 195 (QTFLTIRLPYCGPNIIDSYFCDVPLVIKLACTDTYLT) the chain is Extracellular. The helical transmembrane segment at 196–219 (GILIVTNSGTISLSCFLAVVTSYM) threads the bilayer. The Cytoplasmic segment spans residues 220-235 (VILVSLRKHSAEGRQK). A helical membrane pass occupies residues 236–258 (ALSTCSAHFMVVALFFGPCIFIY). Residues 259–269 (TRPDTSFSIDK) lie on the Extracellular side of the membrane. R260 contacts Cu cation. A helical transmembrane segment spans residues 270–289 (VVSVFYTVVTPLLNPFIYTL). Over 290-313 (RNEEVKSAMKQLRQRQVFFTKSYT) the chain is Cytoplasmic.

It belongs to the G-protein coupled receptor 1 family.

It is found in the cell membrane. Copper binding enhances receptor activity in response to odorant binding. Olfactory receptor that is activated by the binding of organosulfur odorants with thioether groups such as (methylthio)methanethiol (MTMT) and bis(methylthiomethyl) disulfide. Also binds odorants cis-cyclooctene and tert-butyl mercaptan. The activity of this receptor is mediated by G proteins which activate adenylyl cyclase. The polypeptide is Olfactory receptor 4E2 (Homo sapiens (Human)).